A 65-amino-acid polypeptide reads, in one-letter code: MKFFLGQTVELKGVGIPGLISKVLPPFKWSGIQIKEAYIVSWVDGNEDLRMGDELSPIYGLKELV.

This is an uncharacterized protein from Escherichia coli (Bacteriophage T4).